A 683-amino-acid chain; its full sequence is Elongation factor G 1 (683 aa).

Residues 3-278 form the tr-type G domain; the sequence is DKMRNIGIMA…AVVDFLPAPN (276 aa). Residues 12–19, 76–80, and 130–133 contribute to the GTP site; these read AHIDAGKT, DTPGH, and NKMD.

This sequence belongs to the TRAFAC class translation factor GTPase superfamily. Classic translation factor GTPase family. EF-G/EF-2 subfamily.

It localises to the cytoplasm. In terms of biological role, catalyzes the GTP-dependent ribosomal translocation step during translation elongation. During this step, the ribosome changes from the pre-translocational (PRE) to the post-translocational (POST) state as the newly formed A-site-bound peptidyl-tRNA and P-site-bound deacylated tRNA move to the P and E sites, respectively. Catalyzes the coordinated movement of the two tRNA molecules, the mRNA and conformational changes in the ribosome. This chain is Elongation factor G 1, found in Treponema denticola (strain ATCC 35405 / DSM 14222 / CIP 103919 / JCM 8153 / KCTC 15104).